The following is a 258-amino-acid chain: Translocon-associated protein subunit alpha (258 aa).

The first 24 residues, 1–24, serve as a signal peptide directing secretion; that stretch reads MMNLRVLFLALLLLASPLLQVARC. Topologically, residues 25–190 are lumenal; that stretch reads QSDAEDHSSL…ESGGLLSGES (166 aa). Residues asparagine 57, asparagine 119, and asparagine 127 are each glycosylated (N-linked (GlcNAc...) asparagine). A helical membrane pass occupies residues 191 to 209; sequence VFLLTLGIGLLLLLGLWAY. Topologically, residues 210–258 are cytoplasmic; it reads SQVQRLTKKTKKVSKVEVGTRSTEASLDEWLEGTTLAKTSSGKTKNKKN.

This sequence belongs to the TRAP-alpha family. As to quaternary structure, heterotetramer of TRAP-alpha, TRAP-beta, TRAP-delta and TRAP-gamma. Phosphorylated in its cytoplasmic tail.

Its subcellular location is the endoplasmic reticulum membrane. TRAP proteins are part of a complex whose function is to bind calcium to the ER membrane and thereby regulate the retention of ER resident proteins. May be involved in the recycling of the translocation apparatus after completion of the translocation process or may function as a membrane-bound chaperone facilitating folding of translocated proteins. The sequence is that of Translocon-associated protein subunit alpha from Arabidopsis thaliana (Mouse-ear cress).